The following is a 145-amino-acid chain: Trafficking protein particle complex subunit 1 (145 aa).

This sequence belongs to the TRAPP small subunits family. BET5 subfamily. Part of the multisubunit transport protein particle (TRAPP) complex. The heterodimer TRAPPC6B-TRAPPC3 interacts with TRAPPC1 likely providing a core for TRAPP complex formation.

The protein localises to the golgi apparatus. It localises to the cis-Golgi network. The protein resides in the endoplasmic reticulum. May play a role in vesicular transport from endoplasmic reticulum to Golgi. The chain is Trafficking protein particle complex subunit 1 (TRAPPC1) from Bos taurus (Bovine).